Reading from the N-terminus, the 209-residue chain is Elongation factor Ts, chloroplastic (209 aa).

It belongs to the EF-Ts family.

It is found in the plastid. Its subcellular location is the chloroplast. Associates with the EF-Tu.GDP complex and induces the exchange of GDP to GTP. It remains bound to the aminoacyl-tRNA.EF-Tu.GTP complex up to the GTP hydrolysis stage on the ribosome. In Cyanidioschyzon merolae (strain NIES-3377 / 10D) (Unicellular red alga), this protein is Elongation factor Ts, chloroplastic (tsf).